We begin with the raw amino-acid sequence, 2178 residues long: Streptococcal hemagglutinin (2178 aa).

Positions 1-90 (MFFKRQKGQY…AVVTSSSVYA (90 aa)) are cleaved as a signal peptide. The interval 91–137 (EEEQALEKVIDTRDVLATRGEAVLSEEAATTLSSEGANPVESLSDTL) is non-repeat region 1 (NR1). The ser-rich region 1 (SR1) stretch occupies residues 138–219 (SASESASANS…SLISSDSSNS (82 aa)). The span at 192–244 (TSQSFSSTTSSTQSSNNESLISSDSSNSLNTNQSVSARNQNARVRTRRAVAAN) shows a compositional bias: low complexity. 11 disordered regions span residues 192–246 (TSQS…ANDT), 495–557 (VSAS…SVSA), 584–653 (SAST…SVSA), 836–857 (SASTSASVSASESASTSASVSA), 884–917 (SASTSASVSASESASTSASVSASESASTSASVSA), 944–993 (SAST…SESA), 1020–1289 (SASV…SVSA), 1341–1390 (ASTS…ESAS), 1488–1685 (SASV…SVSA), 1725–1901 (ASTS…SAST), and 2119–2151 (LSQSLSDSQSTSATQSMHDRISKGQLPRTGESE). The segment at 220–449 (LNTNQSVSAR…ANRVVKDLQI (230 aa)) is non-repeat region 2 (NR2). The interval 450-2143 (SKSNSASQSS…SMHDRISKGQ (1694 aa)) is ser-rich region 2 (SR2). Over residues 2119 to 2130 (LSQSLSDSQSTS) the composition is skewed to low complexity. The short motif at 2144–2148 (LPRTG) is the LPXTG sorting signal element. A Pentaglycyl murein peptidoglycan amidated threonine modification is found at threonine 2147. Residues 2148 to 2178 (GESESKASILALGIGALGLAFKKRKKNESED) constitute a propeptide, removed by sortase.

The protein belongs to the serine-rich repeat protein (SRRP) family. In terms of processing, the protein is glycosylated in vivo; constructs without SR1 and SR2 are not glycosylated.

Its subcellular location is the secreted. It localises to the cell wall. Its function is as follows. A cell wall protein involved with PadA in host cell interactions required for colonization and pathogensis. Mediates hemagglutination and adherence to ghst glycoproteins. Recognizes fetuin-A (AHSG), a highly glycosylated human plasma protein, also involved in recognition of human platelets, probably via platelet glycoprotein Ib alpha (GP1BA). Acts in concert with PadA to promote binding to glycosylated human fibronectin (FN1) and vitronectin (VTN), and biofilm formation. Plays a major role in fibronectin and vitronectin binding; binding is mediated by glycosylated regions. Probably mediates interaction of PadA with resting platelets. This is Streptococcal hemagglutinin from Streptococcus gordonii (strain Challis / ATCC 35105 / BCRC 15272 / CH1 / DL1 / V288).